A 443-amino-acid chain; its full sequence is Serine/threonine-protein phosphatase 2A 55 kDa regulatory subunit B beta isoform (443 aa).

WD repeat units follow at residues 22–61 (TEAD…KNQV), 87–128 (EIEE…KRPE), 171–209 (AHTY…QSFN), and 220–260 (ELTE…LCDR). Residue Ser275 is modified to Phosphoserine. 3 WD repeats span residues 279-317 (EIIS…RPVE), 334-375 (ENDC…DVTL), and 410-442 (DFSK…QDKV). Tyr295 bears the Phosphotyrosine mark. Phosphothreonine is present on Thr298.

This sequence belongs to the phosphatase 2A regulatory subunit B family. In terms of assembly, PP2A consists of a common heterodimeric core enzyme, composed of a 36 kDa catalytic subunit (subunit C) and a 65 kDa constant regulatory subunit (PR65 or subunit A), that associates with a variety of regulatory subunits. Proteins that associate with the core dimer include three families of regulatory subunits B (the R2/B/PR55/B55, R3/B''/PR72/PR130/PR59 and R5/B'/B56 families), the 48 kDa variable regulatory subunit, viral proteins, and cell signaling molecules. Interacts with IER5 (via N- and C-terminal regions). Interacts with TOMM22. In terms of tissue distribution, expressed in the brain. Isoform 1 and isoform 2 are expressed in the forbrain. Isoform 1 is more strongly expressed than isoform 2 in the olfactory bulb. Isoform 1 and isoform 2 are weakly expressed in the cerebellum. Isoform 1 is expressed in the testis. Isoform 2 expression is undetectable at birth rising to adult level at day 14.

It localises to the cytoplasm. It is found in the cytoskeleton. Its subcellular location is the membrane. The protein resides in the mitochondrion. The protein localises to the mitochondrion outer membrane. The B regulatory subunit might modulate substrate selectivity and catalytic activity, and might also direct the localization of the catalytic enzyme to a particular subcellular compartment. Within the PP2A holoenzyme complex, isoform 2 is required to promote proapoptotic activity. Isoform 2 regulates neuronal survival through the mitochondrial fission and fusion balance. The sequence is that of Serine/threonine-protein phosphatase 2A 55 kDa regulatory subunit B beta isoform (Ppp2r2b) from Rattus norvegicus (Rat).